Here is a 469-residue protein sequence, read N- to C-terminus: Glutamine synthetase (469 aa).

The GS beta-grasp domain occupies histidine 12–threonine 97. Positions proline 105–valine 469 constitute a GS catalytic domain. Residues glutamate 130 and glutamate 132 each coordinate Mg(2+). Glutamate 208 serves as a coordination point for ATP. Glutamate 213 and glutamate 221 together coordinate Mg(2+). L-glutamate is bound by residues asparagine 265–glycine 266 and glycine 266. Position 270 (histidine 270) interacts with Mg(2+). Residues histidine 272–serine 274 and serine 274 contribute to the ATP site. L-glutamate contacts are provided by arginine 322, glutamate 328, and arginine 340. Residues arginine 340, arginine 345, and lysine 353 each contribute to the ATP site. Position 358 (glutamate 358) interacts with Mg(2+). An L-glutamate-binding site is contributed by arginine 360. At tyrosine 398 the chain carries O-AMP-tyrosine.

The protein belongs to the glutamine synthetase family. As to quaternary structure, oligomer of 12 subunits arranged in the form of two hexameric ring. Requires Mg(2+) as cofactor.

It localises to the cytoplasm. The catalysed reaction is L-glutamate + NH4(+) + ATP = L-glutamine + ADP + phosphate + H(+). Its activity is regulated as follows. The activity of this enzyme could be controlled by adenylation under conditions of abundant glutamine. In terms of biological role, catalyzes the ATP-dependent biosynthesis of glutamine from glutamate and ammonia. This is Glutamine synthetase from Pseudomonas aeruginosa (strain ATCC 15692 / DSM 22644 / CIP 104116 / JCM 14847 / LMG 12228 / 1C / PRS 101 / PAO1).